A 623-amino-acid chain; its full sequence is Endoglucanase 12 (623 aa).

Residues 1–73 (MYSANHWGGS…LGCVVVKRKL (73 aa)) are Cytoplasmic-facing. Residues 74–94 (LWWVLWTLLAAFILIGLPVII) traverse the membrane as a helical; Signal-anchor for type II membrane protein segment. Topologically, residues 95-623 (AKSIPKKKPH…TPPPPSKWKP (529 aa)) are extracellular. The active-site Nucleophile is the aspartate 166. N-linked (GlcNAc...) asparagine glycans are attached at residues asparagine 217, asparagine 236, asparagine 324, asparagine 345, asparagine 408, and asparagine 425. Residues histidine 513, aspartate 561, and glutamate 570 contribute to the active site.

This sequence belongs to the glycosyl hydrolase 9 (cellulase E) family. Ubiquitous.

It is found in the membrane. It carries out the reaction Endohydrolysis of (1-&gt;4)-beta-D-glucosidic linkages in cellulose, lichenin and cereal beta-D-glucans.. In Oryza sativa subsp. japonica (Rice), this protein is Endoglucanase 12 (GLU3).